Reading from the N-terminus, the 241-residue chain is DNA repair protein RecO (241 aa).

This sequence belongs to the RecO family.

Its function is as follows. Involved in DNA repair and RecF pathway recombination. This chain is DNA repair protein RecO, found in Ruegeria sp. (strain TM1040) (Silicibacter sp.).